Consider the following 274-residue polypeptide: Cytochrome b-c1 complex subunit Rieske, mitochondrial (274 aa).

Over 79 to 103 (SHTDVKVPDFYDYRRLEVLDSTKSS) the chain is Mitochondrial matrix. A helical membrane pass occupies residues 104 to 140 (RESSEARKGFSYLVTAVTTVGVAYAAKNAVTQFISSM). At 141-274 (SASADVLAMA…FTSDDMVVVG (134 aa)) the chain is on the mitochondrial intermembrane side. The Rieske domain occupies 187-272 (EAAVELSQLR…YEFTSDDMVV (86 aa)). [2Fe-2S] cluster is bound by residues Cys-217, His-219, Cys-236, His-239, and Ser-241. Cys-222 and Cys-238 are disulfide-bonded.

The protein belongs to the Rieske iron-sulfur protein family. Component of the ubiquinol-cytochrome c oxidoreductase (cytochrome b-c1 complex, complex III, CIII), a multisubunit enzyme composed of 11 subunits. The complex is composed of 3 respiratory subunits cytochrome b, cytochrome c1 and Rieske protein UQCRFS1, 2 core protein subunits UQCRC1/QCR1 and UQCRC2/QCR2, and 6 low-molecular weight protein subunits UQCRH/QCR6, UQCRB/QCR7, UQCRQ/QCR8, UQCR10/QCR9, UQCR11/QCR10 and subunit 9, the cleavage product of Rieske protein UQCRFS1. The complex exists as an obligatory dimer and forms supercomplexes (SCs) in the inner mitochondrial membrane with NADH-ubiquinone oxidoreductase (complex I, CI) and cytochrome c oxidase (complex IV, CIV), resulting in different assemblies (supercomplex SCI(1)III(2)IV(1) and megacomplex MCI(2)III(2)IV(2)). Incorporation of the Rieske protein UQCRFS1 is the penultimate step in complex III assembly. Interacts with TTC19, which is involved in the clearance of UQCRFS1 fragments. As to quaternary structure, component of the ubiquinol-cytochrome c oxidoreductase (cytochrome b-c1 complex, complex III, CIII). Subunit 9 corresponds to the mitochondrial targeting sequence (MTS) of Rieske protein UQCRFS1. It is retained after processing and incorporated inside complex III, where it remains bound to the complex and localizes between the 2 core subunits UQCRC1/QCR1 and UQCRC2/QCR2. It depends on [2Fe-2S] cluster as a cofactor. Proteolytic processing is necessary for the correct insertion of UQCRFS1 in the complex III dimer. Several fragments are generated during UQCRFS1 insertion, most probably due to the endogenous matrix-processing peptidase (MPP) activity of the 2 core protein subunits UQCRC1/QCR1 and UQCRC2/QCR2, which are homologous to the 2 mitochondrial-processing peptidase (MPP) subunits beta-MPP and alpha-MPP respectively. The action of the protease is also necessary for the clearance of the UQCRFS1 fragments.

It localises to the mitochondrion inner membrane. The enzyme catalyses a quinol + 2 Fe(III)-[cytochrome c](out) = a quinone + 2 Fe(II)-[cytochrome c](out) + 2 H(+)(out). Its function is as follows. Component of the ubiquinol-cytochrome c oxidoreductase, a multisubunit transmembrane complex that is part of the mitochondrial electron transport chain which drives oxidative phosphorylation. The respiratory chain contains 3 multisubunit complexes succinate dehydrogenase (complex II, CII), ubiquinol-cytochrome c oxidoreductase (cytochrome b-c1 complex, complex III, CIII) and cytochrome c oxidase (complex IV, CIV), that cooperate to transfer electrons derived from NADH and succinate to molecular oxygen, creating an electrochemical gradient over the inner membrane that drives transmembrane transport and the ATP synthase. The cytochrome b-c1 complex catalyzes electron transfer from ubiquinol to cytochrome c, linking this redox reaction to translocation of protons across the mitochondrial inner membrane, with protons being carried across the membrane as hydrogens on the quinol. In the process called Q cycle, 2 protons are consumed from the matrix, 4 protons are released into the intermembrane space and 2 electrons are passed to cytochrome c. The Rieske protein is a catalytic core subunit containing a [2Fe-2S] iron-sulfur cluster. It cycles between 2 conformational states during catalysis to transfer electrons from the quinol bound in the Q(0) site in cytochrome b to cytochrome c1. Incorporation of UQCRFS1 is the penultimate step in complex III assembly. Functionally, component of the ubiquinol-cytochrome c oxidoreductase (cytochrome b-c1 complex, complex III, CIII). UQCRFS1 undergoes proteolytic processing once it is incorporated in the complex III dimer. One of the fragments, called subunit 9, corresponds to its mitochondrial targeting sequence (MTS). The proteolytic processing is necessary for the correct insertion of UQCRFS1 in the complex III dimer, but the persistence of UQCRFS1-derived fragments may prevent newly imported UQCRFS1 to be processed and assembled into complex III and is detrimental for the complex III structure and function. The sequence is that of Cytochrome b-c1 complex subunit Rieske, mitochondrial (UQCRFS1) from Theropithecus gelada (Gelada baboon).